Here is a 161-residue protein sequence, read N- to C-terminus: Allophycocyanin subunit alpha 1 (161 aa).

N4-methylasparagine is present on Asn-71. (2R,3E)-phycocyanobilin is bound at residue Cys-81.

The protein belongs to the phycobiliprotein family. In terms of assembly, heterohexamer of two alpha chains, one alpha-B chain and three beta chains. In terms of processing, contains one covalently linked phycocyanobilin chromophore. The chromophore is added by phycocyanobilin lyase CpcS 1.

It localises to the cellular thylakoid membrane. Functionally, light-harvesting photosynthetic bile pigment-protein from the phycobiliprotein complex. Allophycocyanin has a maximum absorption at approximately 650 to 653 nanometers. This chain is Allophycocyanin subunit alpha 1 (apcA1), found in Nostoc sp. (strain PCC 7120 / SAG 25.82 / UTEX 2576).